The primary structure comprises 194 residues: Orotate phosphoribosyltransferase (194 aa).

5-phospho-alpha-D-ribose 1-diphosphate contacts are provided by residues K98 and 122-130 (EDVLTTGGS). T126 and R154 together coordinate orotate.

The protein belongs to the purine/pyrimidine phosphoribosyltransferase family. PyrE subfamily. As to quaternary structure, homodimer. The cofactor is Mg(2+).

The enzyme catalyses orotidine 5'-phosphate + diphosphate = orotate + 5-phospho-alpha-D-ribose 1-diphosphate. Its pathway is pyrimidine metabolism; UMP biosynthesis via de novo pathway; UMP from orotate: step 1/2. Functionally, catalyzes the transfer of a ribosyl phosphate group from 5-phosphoribose 1-diphosphate to orotate, leading to the formation of orotidine monophosphate (OMP). The chain is Orotate phosphoribosyltransferase from Deinococcus radiodurans (strain ATCC 13939 / DSM 20539 / JCM 16871 / CCUG 27074 / LMG 4051 / NBRC 15346 / NCIMB 9279 / VKM B-1422 / R1).